Here is a 127-residue protein sequence, read N- to C-terminus: Photosystem II reaction center Psb28 protein (127 aa).

Residues 107-127 (GLGYSQNQNSDQTDGDANAEA) are disordered. Polar residues predominate over residues 109-118 (GYSQNQNSDQ).

It belongs to the Psb28 family. As to quaternary structure, part of the photosystem II complex.

The protein localises to the cellular thylakoid membrane. This is Photosystem II reaction center Psb28 protein from Parasynechococcus marenigrum (strain WH8102).